Reading from the N-terminus, the 283-residue chain is Mau operon transcriptional activator (283 aa).

The HTH lysR-type domain maps to 1-58; sequence MNWDDLRVVAAINRCGSFNRAAKMLNVEETTIARRLARLEGSLGCVLFQAVDGQRRPT. Positions 18-37 form a DNA-binding region, H-T-H motif; it reads FNRAAKMLNVEETTIARRLA.

Belongs to the LysR transcriptional regulatory family.

Transcriptional activator of the mau genes involved in methylamine metabolism. The chain is Mau operon transcriptional activator (mauR) from Paracoccus denitrificans.